A 123-amino-acid polypeptide reads, in one-letter code: Small ribosomal subunit protein uS13 (123 aa).

It belongs to the universal ribosomal protein uS13 family. Part of the 30S ribosomal subunit. Forms a loose heterodimer with protein S19. Forms two bridges to the 50S subunit in the 70S ribosome.

In terms of biological role, located at the top of the head of the 30S subunit, it contacts several helices of the 16S rRNA. In the 70S ribosome it contacts the 23S rRNA (bridge B1a) and protein L5 of the 50S subunit (bridge B1b), connecting the 2 subunits; these bridges are implicated in subunit movement. Contacts the tRNAs in the A and P-sites. The polypeptide is Small ribosomal subunit protein uS13 (Neorickettsia sennetsu (strain ATCC VR-367 / Miyayama) (Ehrlichia sennetsu)).